The primary structure comprises 406 residues: 4-hydroxy-3-methylbut-2-en-1-yl diphosphate synthase (ferredoxin) (406 aa).

Residues Cys315, Cys318, Cys349, and Glu356 each coordinate [4Fe-4S] cluster.

This sequence belongs to the IspG family. [4Fe-4S] cluster is required as a cofactor.

It carries out the reaction (2E)-4-hydroxy-3-methylbut-2-enyl diphosphate + 2 oxidized [2Fe-2S]-[ferredoxin] + H2O = 2-C-methyl-D-erythritol 2,4-cyclic diphosphate + 2 reduced [2Fe-2S]-[ferredoxin] + H(+). It participates in isoprenoid biosynthesis; isopentenyl diphosphate biosynthesis via DXP pathway; isopentenyl diphosphate from 1-deoxy-D-xylulose 5-phosphate: step 5/6. Its function is as follows. Converts 2C-methyl-D-erythritol 2,4-cyclodiphosphate (ME-2,4cPP) into 1-hydroxy-2-methyl-2-(E)-butenyl 4-diphosphate. The protein is 4-hydroxy-3-methylbut-2-en-1-yl diphosphate synthase (ferredoxin) of Gloeothece citriformis (strain PCC 7424) (Cyanothece sp. (strain PCC 7424)).